A 93-amino-acid chain; its full sequence is DNA/RNA-binding protein Alba (93 aa).

At Lys-11 the chain carries N6-acetyllysine.

This sequence belongs to the histone-like Alba family. Acetylated. Acetylation at Lys-11 decreases DNA-binding affinity.

Its subcellular location is the cytoplasm. The protein localises to the chromosome. Its function is as follows. Binds double-stranded DNA tightly but without sequence specificity. Involved in DNA compaction. The chain is DNA/RNA-binding protein Alba from Pyrococcus abyssi (strain GE5 / Orsay).